A 236-amino-acid polypeptide reads, in one-letter code: Transcriptional activator protein SolR (236 aa).

Residues 169–234 enclose the HTH luxR-type domain; that stretch reads VPESNAVLTT…QAVVKAIATG (66 aa). Residues 193 to 212 constitute a DNA-binding region (H-T-H motif); it reads AYEIGQILRISERTVNFHVN.

It belongs to the autoinducer-regulated transcriptional regulatory protein family.

In Ralstonia solanacearum (Pseudomonas solanacearum), this protein is Transcriptional activator protein SolR (solR).